We begin with the raw amino-acid sequence, 357 residues long: Elongation factor Ts (357 aa).

The involved in Mg(2+) ion dislocation from EF-Tu stretch occupies residues 82–85 (TDFV).

The protein belongs to the EF-Ts family.

It is found in the cytoplasm. Functionally, associates with the EF-Tu.GDP complex and induces the exchange of GDP to GTP. It remains bound to the aminoacyl-tRNA.EF-Tu.GTP complex up to the GTP hydrolysis stage on the ribosome. This is Elongation factor Ts from Campylobacter jejuni (strain RM1221).